We begin with the raw amino-acid sequence, 345 residues long: D(2) dopamine receptor B (345 aa).

At 1–10 (EWRFSRIHCD) the chain is on the extracellular side. Cys-9 and Cys-84 form a disulfide bridge. Residues 11-32 (IFVTLDVMMCTASILNLCAISI) form a helical membrane-spanning segment. Residues 33–53 (DRYTAVAMPMLYNTRYSSKRR) lie on the Cytoplasmic side of the membrane. The chain crosses the membrane as a helical span at residues 54–74 (VTVMISVVWVLSFAISCPLLF). At 75–90 (GLNNTASTVCIIDNPA) the chain is on the extracellular side. N-linked (GlcNAc...) asparagine glycosylation is present at Asn-77. Residues 91–115 (FVIYSSIVSFYVPFIVTLLVYVQIY) traverse the membrane as a helical segment. Residues 116-275 (IVLRKRRKRV…SQHKEKKATQ (160 aa)) are Cytoplasmic-facing. Over residues 166–177 (KKKVEAGNHPED) the composition is skewed to basic and acidic residues. Positions 166-199 (KKKVEAGNHPEDMEMEMMSSTSPPEKTKHKSASP) are disordered. A helical transmembrane segment spans residues 276–297 (MLAIVLGVFIICWLPFFITHIL). Residues 298–311 (NMHCNCNIPQALYS) lie on the Extracellular side of the membrane. A disulfide bridge links Cys-301 with Cys-303. Residues 312 to 333 (AFTWLGYVNSAVNPIIYTTFNV) traverse the membrane as a helical segment. At 334-345 (EFRKAFIKILHC) the chain is on the cytoplasmic side. Cys-345 is lipidated: S-palmitoyl cysteine.

It belongs to the G-protein coupled receptor 1 family. Post-translationally, palmitoylated. Palmitoylation is probably required for proper localization to the plasma membrane and stability of the receptor. Brain; pituitary.

The protein resides in the cell membrane. Its subcellular location is the golgi apparatus membrane. Its function is as follows. This is one of the five types (D1 to D5) of receptors for dopamine. The activity of this receptor is mediated by G proteins which inhibits adenylyl cyclase. In Xenopus D2R is involved in the regulation of the melanotrope cells of the intermediate pituitary during background adaptation of the animal. This chain is D(2) dopamine receptor B (drd2-b), found in Xenopus laevis (African clawed frog).